Here is a 201-residue protein sequence, read N- to C-terminus: Peptidyl-tRNA hydrolase (201 aa).

Tyrosine 15 is a binding site for tRNA. The active-site Proton acceptor is histidine 20. Positions 66, 68, and 114 each coordinate tRNA.

The protein belongs to the PTH family. Monomer.

It localises to the cytoplasm. The enzyme catalyses an N-acyl-L-alpha-aminoacyl-tRNA + H2O = an N-acyl-L-amino acid + a tRNA + H(+). In terms of biological role, hydrolyzes ribosome-free peptidyl-tRNAs (with 1 or more amino acids incorporated), which drop off the ribosome during protein synthesis, or as a result of ribosome stalling. Its function is as follows. Catalyzes the release of premature peptidyl moieties from peptidyl-tRNA molecules trapped in stalled 50S ribosomal subunits, and thus maintains levels of free tRNAs and 50S ribosomes. The protein is Peptidyl-tRNA hydrolase of Burkholderia pseudomallei (strain K96243).